We begin with the raw amino-acid sequence, 704 residues long: MLGNQSADFSEKGEDEIVRQLCANGICMKTTEVEAKLDEGNIQEAESSLREGLSLNFEEARALLGRLEYQRGNLEGALRVFEGIDLQAAIQRLQVSVPLEKPATKKNRPREPQQSVSQHAANLVLEAIYLKAKSLQKLGRITEAAHECKSVLDSVEKIFQQGIPDAQVDNKLQETVSHAVELLPALWKESGDYQEAISAYRRALLSQWNLDNDCCARIQKDFAVFLLHSGVEASPPSLGSQIEGSYIPRNNIEEAILLLMILLKKFNLGKAKWDPSVFEHLTFALSLCSQTAVLAKQLEEVMPGVFSRIERWNTLALSYSAAGQNSAAVNLLRKSLHKHEQPDDLVALLLAAKLCSEEPSLAAEGTGYAQRAINNAQGMDEHLKGVGLRMLGLCLGKQAKVPTSDFERSRLQSESLKALDGAIAFEHNNPDLIFELGVQYAEQRNLKAASRYAKEFIDATGGSVLKGWRFLALVLSAQQRFSEAEVVTDAALDETAKWDQGPLLRLKAKLKISQSNPTEAVETYRYLLALVQAQRKSFGPLRTLSQMEEDKVNEFEVWHGLAYLYSSLSHWNDVEVCLKKAGELKQYSASMLHTEGRMWEGRKEFKPALAAFLDGLLLDGSSVPCKVAVGALLSERGKDHQPTLPVARSLLSDALRIDPTNRKAWYYLGMVHKSDGRIADATDCFQAASMLEESDPIESFSTIL.

TPR repeat units follow at residues 24 to 57, 58 to 90, 177 to 210, 309 to 342, 430 to 463, 555 to 588, 589 to 622, and 662 to 695; these read NGIC…SLNF, EEAR…QAAI, SHAV…QWNL, IERW…HEQP, PDLI…TGGS, FEVW…KQYS, ASML…DGSS, and RKAW…EESD.

As to quaternary structure, interacts with calmodulin in a calcium-dependent manner. Expressed only in pollen and in pollen tubes.

Calmodulin-binding protein essential for pollen germination, but not necessary for microsporogenesis or gametogenesis. In Arabidopsis thaliana (Mouse-ear cress), this protein is Protein NPG1.